We begin with the raw amino-acid sequence, 273 residues long: Putative pyruvate, phosphate dikinase regulatory protein (273 aa).

153–160 (GVSRTSKT) is an ADP binding site.

Belongs to the pyruvate, phosphate/water dikinase regulatory protein family. PDRP subfamily.

The enzyme catalyses N(tele)-phospho-L-histidyl/L-threonyl-[pyruvate, phosphate dikinase] + ADP = N(tele)-phospho-L-histidyl/O-phospho-L-threonyl-[pyruvate, phosphate dikinase] + AMP + H(+). It carries out the reaction N(tele)-phospho-L-histidyl/O-phospho-L-threonyl-[pyruvate, phosphate dikinase] + phosphate + H(+) = N(tele)-phospho-L-histidyl/L-threonyl-[pyruvate, phosphate dikinase] + diphosphate. In terms of biological role, bifunctional serine/threonine kinase and phosphorylase involved in the regulation of the pyruvate, phosphate dikinase (PPDK) by catalyzing its phosphorylation/dephosphorylation. In Sinorhizobium fredii (strain NBRC 101917 / NGR234), this protein is Putative pyruvate, phosphate dikinase regulatory protein.